A 313-amino-acid polypeptide reads, in one-letter code: Porphobilinogen deaminase (313 aa).

An S-(dipyrrolylmethanemethyl)cysteine modification is found at cysteine 242.

This sequence belongs to the HMBS family. In terms of assembly, monomer. It depends on dipyrromethane as a cofactor.

It catalyses the reaction 4 porphobilinogen + H2O = hydroxymethylbilane + 4 NH4(+). It functions in the pathway porphyrin-containing compound metabolism; protoporphyrin-IX biosynthesis; coproporphyrinogen-III from 5-aminolevulinate: step 2/4. Tetrapolymerization of the monopyrrole PBG into the hydroxymethylbilane pre-uroporphyrinogen in several discrete steps. This chain is Porphobilinogen deaminase, found in Pseudomonas fluorescens (strain SBW25).